The chain runs to 529 residues: Ectonucleoside triphosphate diphosphohydrolase 3 (529 aa).

Topologically, residues 1–22 (MFTVMTRQPCEQAGFRALSRTP) are cytoplasmic. The chain crosses the membrane as a helical span at residues 23–43 (AIVTLVVLLVSIVVLVTLTLI). At 44 to 485 (QIRHPQVLPP…PLIHLPIQPP (442 aa)) the chain is on the extracellular side. N-linked (GlcNAc...) asparagine glycosylation is present at asparagine 81. A disulfide bond links cysteine 92 and cysteine 116. The N-linked (GlcNAc...) asparagine glycan is linked to asparagine 149. The active-site Proton acceptor is the glutamate 182. Residue 222 to 226 (GASTQ) coordinates ATP. Asparagine 238, asparagine 284, and asparagine 318 each carry an N-linked (GlcNAc...) asparagine glycan. 3 cysteine pairs are disulfide-bonded: cysteine 261–cysteine 308, cysteine 289–cysteine 334, and cysteine 347–cysteine 353. N-linked (GlcNAc...) asparagine glycosylation is found at asparagine 381 and asparagine 392. A disulfide bridge links cysteine 399 with cysteine 422. The N-linked (GlcNAc...) asparagine glycan is linked to asparagine 454. A helical membrane pass occupies residues 486–506 (VFMGVLAFFTAIALLCLAFLL). The Cytoplasmic segment spans residues 507 to 529 (YLCSSFRTKERSENAFDQAVDSD).

Belongs to the GDA1/CD39 NTPase family. The cofactor is Ca(2+). Mg(2+) serves as cofactor.

It is found in the cell membrane. It catalyses the reaction a ribonucleoside 5'-triphosphate + 2 H2O = a ribonucleoside 5'-phosphate + 2 phosphate + 2 H(+). Functionally, catalyzes the hydrolysis of nucleoside triphosphates and diphosphates. Has a threefold preference for the hydrolysis of ATP and UTP over ADP and UDP. The polypeptide is Ectonucleoside triphosphate diphosphohydrolase 3 (Mus musculus (Mouse)).